We begin with the raw amino-acid sequence, 536 residues long: Global nitrogen regulator NrpR (536 aa).

Positions 7–72 (VEILSILSEA…EITEKGIEEL (66 aa)) are winged helix-turn-helix. 2 NRD regions span residues 80-314 (RIGS…KGKF) and 315-536 (KVTP…YDDI).

Belongs to the NrpR family. As to quaternary structure, homotetramer. Binds to a single operator as a dimer and cooperatively to two operators as a dimer pair.

With respect to regulation, under nitrogen limitation, binding of the intracellular nitrogen metabolite 2-oxoglutarate to NrpR decreases the binding affinity of NrpR to DNA, leading to initiation of transcription. Transcriptional repressor of nitrogen fixation and assimilation genes. Binds to two tandem operators in the glnA and nif promoters, thereby blocking transcription of the genes. The sequence is that of Global nitrogen regulator NrpR from Methanococcus maripaludis (strain DSM 14266 / JCM 13030 / NBRC 101832 / S2 / LL).